A 353-amino-acid polypeptide reads, in one-letter code: Farnesyl pyrophosphate synthase (353 aa).

3 residues coordinate isopentenyl diphosphate: Lys-57, Arg-60, and Gln-96. At Lys-57 the chain carries N6-(2-hydroxyisobutyryl)lysine; alternate. Residue Lys-57 is modified to N6-acetyllysine; alternate. Residues Asp-103 and Asp-107 each contribute to the Mg(2+) site. Arg-112 is a binding site for dimethylallyl diphosphate. Arg-113 lines the isopentenyl diphosphate pocket. 5 residues coordinate dimethylallyl diphosphate: Lys-200, Thr-201, Gln-240, Lys-257, and Lys-266.

Belongs to the FPP/GGPP synthase family. As to quaternary structure, homodimer. Interacts with RSAD2. The cofactor is Mg(2+). In terms of tissue distribution, testis, liver, kidney, brain and adrenal gland.

It is found in the cytoplasm. It catalyses the reaction isopentenyl diphosphate + dimethylallyl diphosphate = (2E)-geranyl diphosphate + diphosphate. It carries out the reaction isopentenyl diphosphate + (2E)-geranyl diphosphate = (2E,6E)-farnesyl diphosphate + diphosphate. It functions in the pathway isoprenoid biosynthesis; farnesyl diphosphate biosynthesis; farnesyl diphosphate from geranyl diphosphate and isopentenyl diphosphate: step 1/1. It participates in isoprenoid biosynthesis; geranyl diphosphate biosynthesis; geranyl diphosphate from dimethylallyl diphosphate and isopentenyl diphosphate: step 1/1. Its activity is regulated as follows. Inactivated by interferon-induced RSAD2. This inactivation may result of disruption of lipid rafts at the plasma membrane, and thus have an antiviral effect since many enveloped viruses need lipid rafts to bud efficiently out of the cell. Key enzyme in isoprenoid biosynthesis which catalyzes the formation of farnesyl diphosphate (FPP), a precursor for several classes of essential metabolites including sterols, dolichols, carotenoids, and ubiquinones. FPP also serves as substrate for protein farnesylation and geranylgeranylation. Catalyzes the sequential condensation of isopentenyl pyrophosphate with the allylic pyrophosphates, dimethylallyl pyrophosphate, and then with the resultant geranylpyrophosphate to the ultimate product farnesyl pyrophosphate. The sequence is that of Farnesyl pyrophosphate synthase (Fdps) from Rattus norvegicus (Rat).